We begin with the raw amino-acid sequence, 311 residues long: tRNA dimethylallyltransferase (311 aa).

13–20 provides a ligand contact to ATP; it reads GPTASGKT. 15-20 is a substrate binding site; the sequence is TASGKT. Interaction with substrate tRNA stretches follow at residues 38–41 and 166–170; these read DSMQ and QRVLR.

It belongs to the IPP transferase family. In terms of assembly, monomer. Mg(2+) serves as cofactor.

It catalyses the reaction adenosine(37) in tRNA + dimethylallyl diphosphate = N(6)-dimethylallyladenosine(37) in tRNA + diphosphate. Functionally, catalyzes the transfer of a dimethylallyl group onto the adenine at position 37 in tRNAs that read codons beginning with uridine, leading to the formation of N6-(dimethylallyl)adenosine (i(6)A). The protein is tRNA dimethylallyltransferase of Staphylococcus aureus (strain bovine RF122 / ET3-1).